We begin with the raw amino-acid sequence, 271 residues long: Orotidine 5'-phosphate decarboxylase (271 aa).

The active-site Proton donor is K95.

This sequence belongs to the OMP decarboxylase family. Type 2 subfamily.

The enzyme catalyses orotidine 5'-phosphate + H(+) = UMP + CO2. It functions in the pathway pyrimidine metabolism; UMP biosynthesis via de novo pathway; UMP from orotate: step 2/2. This is Orotidine 5'-phosphate decarboxylase from Aromatoleum aromaticum (strain DSM 19018 / LMG 30748 / EbN1) (Azoarcus sp. (strain EbN1)).